The primary structure comprises 205 residues: Anaerobic dimethyl sulfoxide reductase chain B (205 aa).

4Fe-4S ferredoxin-type domains are found at residues 5-33 (YGFFIDSSRCAGCKTCELACKDYKDLTPE), 59-89 (FAYYLSISCNHCEDPACTKVCPSGAMHKRED), and 90-119 (GFVVVDEDVCIGCRYCHMACPYGAPQYNET). Residues cysteine 14, cysteine 17, cysteine 20, cysteine 24, cysteine 67, cysteine 70, cysteine 75, cysteine 79, cysteine 99, cysteine 102, cysteine 105, cysteine 109, cysteine 126, cysteine 129, cysteine 141, and cysteine 145 each contribute to the [4Fe-4S] cluster site. Positions 184 to 205 (KPNANSRPTGDTTGYLANPKEV) are disordered. Residues 186 to 195 (NANSRPTGDT) show a composition bias toward polar residues.

As to quaternary structure, heterotrimeric enzyme composed of a catalytic heterodimer (DmsAB) and a membrane anchor protein (DmsC). [4Fe-4S] cluster is required as a cofactor.

Functionally, electron transfer subunit of the terminal reductase during anaerobic growth on various sulfoxide and N-oxide compounds. This is Anaerobic dimethyl sulfoxide reductase chain B (dmsB) from Shigella flexneri.